A 397-amino-acid chain; its full sequence is Calponin-like protein clik-2 (397 aa).

6 Calponin-like repeats span residues 29-54, 73-98, 119-144, 161-189, 209-234, and 255-280; these read LSQQ…RWNI, LRVQ…RFQV, IPKQ…RNQV, LCFQ…RQAT, TPWY…RDVL, and VPLQ…RNTQ. A disordered region spans residues 301 to 397; that stretch reads EETKPPGSAS…EEEEEEEEDE (97 aa). Positions 321 to 332 are enriched in basic and acidic residues; the sequence is KFEERESSRQSE. Acidic residues-rich tracts occupy residues 344 to 360 and 367 to 397; these read VEPE…EEKI and EEEE…EEDE.

This sequence belongs to the calponin family. As to expression, expressed in pharyngeal muscle cells (at protein level).

In terms of biological role, required for pharyngeal pumping. The sequence is that of Calponin-like protein clik-2 from Caenorhabditis elegans.